The sequence spans 195 residues: Imidazoleglycerol-phosphate dehydratase (195 aa).

It belongs to the imidazoleglycerol-phosphate dehydratase family.

Its subcellular location is the cytoplasm. It catalyses the reaction D-erythro-1-(imidazol-4-yl)glycerol 3-phosphate = 3-(imidazol-4-yl)-2-oxopropyl phosphate + H2O. It participates in amino-acid biosynthesis; L-histidine biosynthesis; L-histidine from 5-phospho-alpha-D-ribose 1-diphosphate: step 6/9. The polypeptide is Imidazoleglycerol-phosphate dehydratase (Cereibacter sphaeroides (strain ATCC 17025 / ATH 2.4.3) (Rhodobacter sphaeroides)).